The chain runs to 185 residues: MTTHPIHLHHDDPAHGGERACMSRRSFLLAGGAMVTLASLPGTAVAALKALKADYPAVKIGKLSRLKTGEPLEFAYPYPDVNNILVKLGAEAGGGVGPQADVVAFNQQCTHMGGPLQGTYKAKHQALGPCPLHLTTFDLTRHGMVISGHATESLPQIVLEVRGDDIYAVGVQGLIYGYSSNRAGR.

The tat-type signal signal peptide spans 1–46 (MTTHPIHLHHDDPAHGGERACMSRRSFLLAGGAMVTLASLPGTAVA). In terms of domain architecture, Rieske spans 69–168 (GEPLEFAYPY…LEVRGDDIYA (100 aa)). Residues Cys109, His111, Cys130, and His133 each contribute to the [2Fe-2S] cluster site.

Belongs to the AOX family. In terms of assembly, the iodate reductase (Idr) complex is composed of a molybdopterin-dependent iodate reductase (IdrA and IdrB subunits) and two associated peroxidases (IdrP1 and IdrP2). Requires [2Fe-2S] cluster as cofactor. In terms of processing, predicted to be exported by the Tat system. The position of the signal peptide cleavage has not been experimentally proven.

The protein localises to the periplasm. Involved in iodate respiration. May accept electrons from cytochrome c551, and catalyze the reduction of iodate (IO(3)(-)) to produce the chemically unstable intermediate hypoiodous acid (HIO). This intermediate then undergoes abiotic disproportionation to yield two molecules of iodide (I(-)) and one molecule of iodate. The resultant iodate subsequently cycles back into the reductive pathway. The initial reduction of iodate may inadvertently produce low levels of incidental toxic H(2)O(2), which is detoxified by IdrP1 and IdrP2. This chain is Iodate reductase subunit IdrB, found in Denitromonas iodatirespirans.